The following is a 152-amino-acid chain: 3-hydroxyacyl-[acyl-carrier-protein] dehydratase FabZ (152 aa).

Residue histidine 58 is part of the active site.

It belongs to the thioester dehydratase family. FabZ subfamily.

It is found in the cytoplasm. The enzyme catalyses a (3R)-hydroxyacyl-[ACP] = a (2E)-enoyl-[ACP] + H2O. Its function is as follows. Involved in unsaturated fatty acids biosynthesis. Catalyzes the dehydration of short chain beta-hydroxyacyl-ACPs and long chain saturated and unsaturated beta-hydroxyacyl-ACPs. In Prochlorococcus marinus (strain MIT 9215), this protein is 3-hydroxyacyl-[acyl-carrier-protein] dehydratase FabZ.